A 28-amino-acid polypeptide reads, in one-letter code: Small spore coat assembly protein A (28 aa).

Residues 8-28 (GFALLVVLFILLIIVGAAYIY) traverse the membrane as a helical segment.

It belongs to the SscA family.

It is found in the spore coat. The protein localises to the membrane. Spore protein involved in the assembly of several components of the spore coat, including CotB, CotG and CotH, and in spore germination. In Bacillus subtilis (strain 168), this protein is Small spore coat assembly protein A.